The chain runs to 627 residues: Putative ankyrin repeat protein L122 (627 aa).

12 ANK repeats span residues 61-94, 98-130, 153-186, 190-223, 228-259, 263-296, 300-333, 337-370, 374-407, 411-444, 448-480, and 491-523; these read KGWT…DVHI, KGRT…DINS, HACY…DPNI, YGKT…NANH, AETV…DINH, IGFT…NINL, DGFT…DIND, NNVT…DLEI, YDWT…NVNV, LGHT…NPNL, DKNT…DSNT, and REYN…NYSD.

This Acanthamoeba polyphaga (Amoeba) protein is Putative ankyrin repeat protein L122.